The sequence spans 123 residues: Class I hydrophobin 2 (123 aa).

The signal sequence occupies residues 1–16 (MYAYTVIAFLAASVAA). Cystine bridges form between Cys35/Cys97, Cys43/Cys91, Cys44/Cys72, and Cys98/Cys116.

Belongs to the fungal hydrophobin family.

Its subcellular location is the secreted. It is found in the cell wall. Functionally, aerial growth, conidiation, and dispersal of filamentous fungi in the environment rely upon a capability of their secreting small amphipathic proteins called hydrophobins (HPBs) with low sequence identity. Class I can self-assemble into an outermost layer of rodlet bundles on aerial cell surfaces, conferring cellular hydrophobicity that supports fungal growth, development and dispersal; whereas Class II form highly ordered films at water-air interfaces through intermolecular interactions but contribute nothing to the rodlet structure. HYD1 and HYD2 are required for the structural integrity of the long aerial chains of microconidia. Does not seem to be important for the ability to cause seedling disease. This is Class I hydrophobin 2 from Gibberella moniliformis (Maize ear and stalk rot fungus).